The chain runs to 448 residues: Methylenetetrahydrofolate--tRNA-(uracil-5-)-methyltransferase TrmFO (448 aa).

FAD is bound at residue 13–18; it reads GAGLAG.

This sequence belongs to the MnmG family. TrmFO subfamily. It depends on FAD as a cofactor.

The protein localises to the cytoplasm. The catalysed reaction is uridine(54) in tRNA + (6R)-5,10-methylene-5,6,7,8-tetrahydrofolate + NADH + H(+) = 5-methyluridine(54) in tRNA + (6S)-5,6,7,8-tetrahydrofolate + NAD(+). It carries out the reaction uridine(54) in tRNA + (6R)-5,10-methylene-5,6,7,8-tetrahydrofolate + NADPH + H(+) = 5-methyluridine(54) in tRNA + (6S)-5,6,7,8-tetrahydrofolate + NADP(+). Its function is as follows. Catalyzes the folate-dependent formation of 5-methyl-uridine at position 54 (M-5-U54) in all tRNAs. This is Methylenetetrahydrofolate--tRNA-(uracil-5-)-methyltransferase TrmFO from Streptococcus pyogenes serotype M12 (strain MGAS2096).